Reading from the N-terminus, the 598-residue chain is Sulfoacetaldehyde acetyltransferase (598 aa).

This sequence belongs to the TPP enzyme family. In terms of assembly, homotetramer. Requires Mg(2+) as cofactor. The cofactor is thiamine diphosphate.

It localises to the cytoplasm. The enzyme catalyses acetyl phosphate + sulfite + H(+) = sulfoacetaldehyde + phosphate. It participates in organosulfur degradation; taurine degradation via aerobic pathway; acetyl phosphate and sulfite from taurine: step 2/2. This Castellaniella defragrans (Alcaligenes defragrans) protein is Sulfoacetaldehyde acetyltransferase.